Consider the following 127-residue polypeptide: MAKATAKKRKVIVESTGEAHISSTFNNIIISLTNKKGEVIAWSSAGKMGFRGSKKNTPYAAQMAAEDCSKVALEAGLKKVKVYVKGPGNGRESAIRSIHNGGIEVTEIIDVTPMPHNGCRPPKRRRV.

It belongs to the universal ribosomal protein uS11 family. In terms of assembly, part of the 30S ribosomal subunit. Interacts with proteins S7 and S18. Binds to IF-3.

In terms of biological role, located on the platform of the 30S subunit, it bridges several disparate RNA helices of the 16S rRNA. Forms part of the Shine-Dalgarno cleft in the 70S ribosome. This chain is Small ribosomal subunit protein uS11, found in Flavobacterium johnsoniae (strain ATCC 17061 / DSM 2064 / JCM 8514 / BCRC 14874 / CCUG 350202 / NBRC 14942 / NCIMB 11054 / UW101) (Cytophaga johnsonae).